The sequence spans 425 residues: UDP-N-acetyl-D-glucosamine 6-dehydrogenase (425 aa).

NAD(+) contacts are provided by V17, D35, R40, T86, and T121. Residue C261 is the Nucleophile of the active site. R332 lines the NAD(+) pocket.

The protein belongs to the UDP-glucose/GDP-mannose dehydrogenase family. As to quaternary structure, homotrimer.

The enzyme catalyses UDP-N-acetyl-alpha-D-glucosamine + 2 NAD(+) + H2O = UDP-2-acetamido-2-deoxy-alpha-D-glucuronate + 2 NADH + 3 H(+). It functions in the pathway capsule biogenesis; capsule polysaccharide biosynthesis. Its pathway is glycan metabolism; Vi-antigen biosynthesis. Dehydrogenase required for the biosynthesis of the capsular polysaccharide, commonly referred as the Vi antigen, an important virulence factor. Catalyzes the conversion of UDP-N-acetylglucosamine (UDP-GlcNAc) to UDP-N-acetylglucosaminuronic acid (UDP-GlcNAcA). Cannot use UDP-GalNAc, UDP-Glc and UDP-Gal as substrates. This chain is UDP-N-acetyl-D-glucosamine 6-dehydrogenase, found in Salmonella typhi.